The primary structure comprises 449 residues: Zinc finger and BTB domain-containing protein 14 (449 aa).

In terms of domain architecture, BTB spans 36-102 (CDIAIVVEDV…MYTAKISVKK (67 aa)). Lys-46 participates in a covalent cross-link: Glycyl lysine isopeptide (Lys-Gly) (interchain with G-Cter in SUMO2). The short motif at 50–66 (HRCVLAACSTYFKKLFK) is the Nuclear localization signal element. A disordered region spans residues 156–194 (ADAQDDDVEEIGDQDDSPSDDTVEGTPPSQEDGKSPTTT). A compositionally biased stretch (acidic residues) spans 157 to 178 (DAQDDDVEEIGDQDDSPSDDTV). Residues Lys-203 and Lys-249 each participate in a glycyl lysine isopeptide (Lys-Gly) (interchain with G-Cter in SUMO2) cross-link. C2H2-type zinc fingers lie at residues 277-304 (IACQ…ADRP), 305-332 (FVCE…GYKP), 333-360 (YSCE…NERP), 361-388 (FACH…GEKP), and 389-417 (FVCG…ERKQ). Residues 405 to 417 (KRHENNMHSERKQ) show a composition bias toward basic and acidic residues. A disordered region spans residues 405 to 424 (KRHENNMHSERKQVTPSAIQ).

This sequence belongs to the krueppel C2H2-type zinc-finger protein family. As to quaternary structure, interacts with ZBTB21. As to expression, ubiquitous.

The protein resides in the nucleus. Functionally, transcriptional activator of the dopamine transporter (DAT), binding it's promoter at the consensus sequence 5'-CCTGCACAGTTCACGGA-3'. Binds to 5'-d(GCC)(n)-3' trinucleotide repeats in promoter regions and acts as a repressor of the FMR1 gene. Transcriptional repressor of MYC and thymidine kinase promoters. The polypeptide is Zinc finger and BTB domain-containing protein 14 (Zbtb14) (Mus musculus (Mouse)).